Here is a 443-residue protein sequence, read N- to C-terminus: Ribosomal protein uS12 methylthiotransferase RimO (443 aa).

An MTTase N-terminal domain is found at 1–114; it reads MGFVSLGCPK…VMQAVHTHLP (114 aa). [4Fe-4S] cluster-binding residues include cysteine 8, cysteine 44, cysteine 73, cysteine 145, cysteine 149, and cysteine 152. The Radical SAM core domain occupies 131–372; that stretch reads LTPKHYAYLK…MEVAEEVSAR (242 aa). The TRAM domain maps to 375 to 443; it reads QRKVGQTLRV…ADGHDLWGAV (69 aa).

Belongs to the methylthiotransferase family. RimO subfamily. [4Fe-4S] cluster is required as a cofactor.

Its subcellular location is the cytoplasm. It carries out the reaction L-aspartate(89)-[ribosomal protein uS12]-hydrogen + (sulfur carrier)-SH + AH2 + 2 S-adenosyl-L-methionine = 3-methylsulfanyl-L-aspartate(89)-[ribosomal protein uS12]-hydrogen + (sulfur carrier)-H + 5'-deoxyadenosine + L-methionine + A + S-adenosyl-L-homocysteine + 2 H(+). In terms of biological role, catalyzes the methylthiolation of an aspartic acid residue of ribosomal protein uS12. The chain is Ribosomal protein uS12 methylthiotransferase RimO from Cupriavidus necator (strain ATCC 17699 / DSM 428 / KCTC 22496 / NCIMB 10442 / H16 / Stanier 337) (Ralstonia eutropha).